Here is a 288-residue protein sequence, read N- to C-terminus: Ankyrin repeat and SOCS box protein 8 (288 aa).

S17 is subject to Phosphoserine. ANK repeat units follow at residues 52–81, 85–113, 117–146, and 150–179; these read GTLK…EVNA, YNRT…NPNA, NRDT…SVNA, and NNDT…EVRV. Positions 235-288 constitute an SOCS box domain; it reads QLCEKLTVLCSAPGTLKTLARYAVRRSLGLQYLPDAVKGLPLPVSLKDYLLLLE.

The protein belongs to the ankyrin SOCS box (ASB) family. Interacts with TBK1; this interaction promotes TBK1 proteasomal degradation. In terms of processing, phosphorylated by TBK1.

The protein resides in the cytoplasm. It functions in the pathway protein modification; protein ubiquitination. Its function is as follows. May be a substrate-recognition component of a SCF-like ECS (Elongin-Cullin-SOCS-box protein) E3 ubiquitin-protein ligase complex which mediates the ubiquitination and subsequent proteasomal degradation of target proteins. Inhibits IFN-beta production through the IRF3 signaling pathway by targeting TBK1 via 'Lys-48'-linked ubiquitination, leading to its proteasomal degradation. This chain is Ankyrin repeat and SOCS box protein 8 (Asb8), found in Mus musculus (Mouse).